A 372-amino-acid polypeptide reads, in one-letter code: Flagellar P-ring protein (372 aa).

The signal sequence occupies residues 1–26 (MNLSSLPHRLLAAAVALCAIAAPASA).

The protein belongs to the FlgI family. The basal body constitutes a major portion of the flagellar organelle and consists of four rings (L,P,S, and M) mounted on a central rod.

Its subcellular location is the periplasm. The protein resides in the bacterial flagellum basal body. Its function is as follows. Assembles around the rod to form the L-ring and probably protects the motor/basal body from shearing forces during rotation. The chain is Flagellar P-ring protein from Xanthomonas campestris pv. campestris (strain ATCC 33913 / DSM 3586 / NCPPB 528 / LMG 568 / P 25).